Reading from the N-terminus, the 109-residue chain is Parvalbumin beta 2 (109 aa).

Ala2 carries the post-translational modification N-acetylalanine. EF-hand domains lie at 39–74 (KSPA…FSAG) and 78–109 (LSDA…MIKA). Residues Asp52, Asp54, Ser56, Phe58, Glu60, Glu63, Asp91, Asp93, Asp95, Lys97, and Glu102 each coordinate Ca(2+).

Belongs to the parvalbumin family. In terms of assembly, monomer.

Its function is as follows. In muscle, parvalbumin is thought to be involved in relaxation after contraction. It binds two calcium ions. The chain is Parvalbumin beta 2 from Gadus morhua (Atlantic cod).